The primary structure comprises 388 residues: MREYNLFTSESVSEGHPDKMADQISDAILDAILRQDLHARVACETLVKTGAVILAGEITTTANIDVERIVRDTVNGIGYHHSDLGFDGETCAVINMLGKQSPEIAQGVDRADPEEQGAGDQGLMFGYASNETEVLMPAPIEYAHRLMERQSELRRAGELPWLRPDAKAQITLKYDGSKPVAIDAVVLSTQHDPSISQADLQEAIMESIIKQVLPAELLHAGTRYHINPTGKFVIGGPVGDAGLTGRKIIVDTYGGMARHGGGAFSGKDPSKVDRSAAYAVRYVAKNIVAAGIADRCEVQVSYAIGVAEPTSISINTFGTNKISNDEIIRLIRTHFDLRPYGITRMLNLLQPMYQQTASFGHFGRQGSETAFTWEKIDKAEILKADAGL.

Residue H16 coordinates ATP. Residue D18 participates in Mg(2+) binding. E44 is a K(+) binding site. E57 and Q100 together coordinate L-methionine. The segment at 100 to 110 (QSPEIAQGVDR) is flexible loop. Residues 165–167 (DAK), 231–232 (KF), D240, 246–247 (RK), A263, and K267 contribute to the ATP site. L-methionine is bound at residue D240. K271 contacts L-methionine.

Belongs to the AdoMet synthase family. Homotetramer; dimer of dimers. Mg(2+) is required as a cofactor. K(+) serves as cofactor.

Its subcellular location is the cytoplasm. It carries out the reaction L-methionine + ATP + H2O = S-adenosyl-L-methionine + phosphate + diphosphate. It functions in the pathway amino-acid biosynthesis; S-adenosyl-L-methionine biosynthesis; S-adenosyl-L-methionine from L-methionine: step 1/1. Its function is as follows. Catalyzes the formation of S-adenosylmethionine (AdoMet) from methionine and ATP. The overall synthetic reaction is composed of two sequential steps, AdoMet formation and the subsequent tripolyphosphate hydrolysis which occurs prior to release of AdoMet from the enzyme. This chain is S-adenosylmethionine synthase, found in Psychrobacter arcticus (strain DSM 17307 / VKM B-2377 / 273-4).